The primary structure comprises 352 residues: Molybdenum import ATP-binding protein ModC (352 aa).

The 229-residue stretch at 1–229 (MLELNFSQTL…SVMNPWLPKE (229 aa)) folds into the ABC transporter domain. Position 31 to 38 (31 to 38 (GVSGAGKT)) interacts with ATP. One can recognise a Mop domain in the interval 289 to 352 (QTSIRNVLRA…AQIKSVSITA (64 aa)).

It belongs to the ABC transporter superfamily. Molybdate importer (TC 3.A.1.8) family. The complex is composed of two ATP-binding proteins (ModC), two transmembrane proteins (ModB) and a solute-binding protein (ModA).

It localises to the cell inner membrane. It catalyses the reaction molybdate(out) + ATP + H2O = molybdate(in) + ADP + phosphate + H(+). Functionally, part of the ABC transporter complex ModABC involved in molybdenum import. Responsible for energy coupling to the transport system. The polypeptide is Molybdenum import ATP-binding protein ModC (Escherichia coli (strain K12)).